The following is a 631-amino-acid chain: Phosphomethylpyrimidine synthase (631 aa).

Residues N239, M268, Y297, H333, 353 to 355, 394 to 397, and E433 contribute to the substrate site; these read SRG and DGLR. H437 is a Zn(2+) binding site. Residue Y460 participates in substrate binding. H501 lines the Zn(2+) pocket. 3 residues coordinate [4Fe-4S] cluster: C581, C584, and C589.

It belongs to the ThiC family. As to quaternary structure, homodimer. [4Fe-4S] cluster serves as cofactor.

The catalysed reaction is 5-amino-1-(5-phospho-beta-D-ribosyl)imidazole + S-adenosyl-L-methionine = 4-amino-2-methyl-5-(phosphooxymethyl)pyrimidine + CO + 5'-deoxyadenosine + formate + L-methionine + 3 H(+). It functions in the pathway cofactor biosynthesis; thiamine diphosphate biosynthesis. Functionally, catalyzes the synthesis of the hydroxymethylpyrimidine phosphate (HMP-P) moiety of thiamine from aminoimidazole ribotide (AIR) in a radical S-adenosyl-L-methionine (SAM)-dependent reaction. This chain is Phosphomethylpyrimidine synthase, found in Salmonella arizonae (strain ATCC BAA-731 / CDC346-86 / RSK2980).